Reading from the N-terminus, the 313-residue chain is Synaptophysin (313 aa).

The Cytoplasmic segment spans residues 1-25 (MLLLADMDVVNQLVAGGQFRVVKEP). Residues 21-227 (VVKEPLGFVK…NLWFVFKETG (207 aa)) form the MARVEL domain. Residues 26-49 (LGFVKVLQWVFAIFAFATCGSYSG) form a helical membrane-spanning segment. The Vesicular segment spans residues 50 to 106 (ELQLSVDCANKTKSDLNIEVEFEYPFRLHEVYFEAPTCQGDPKKIFLVGNYSSSAEF). N59 is a glycosylation site (N-linked (GlcNAc...) asparagine). Y81 carries the phosphotyrosine modification. N99 carries N-linked (GlcNAc...) asparagine glycosylation. The helical transmembrane segment at 107–130 (FVTVAVFAFLYSMGALATYIFLQN) threads the bilayer. The Cytoplasmic portion of the chain corresponds to 131–137 (KYRENNK). A helical membrane pass occupies residues 138–161 (GPMLDFLATAVFAFMWLVSSSAWA). Topologically, residues 162 to 199 (KGLSDVKMATDPENIIKGMHVCHQPGNTCKELRDPVTS) are vesicular. A helical membrane pass occupies residues 200-223 (GLNTSVVFGFLNLVLWVGNLWFVF). The Cytoplasmic segment spans residues 224–313 (KETGWAAPFL…GAPTSFSNQM (90 aa)). A disordered region spans residues 238 to 313 (GAPEKQPAPG…GAPTSFSNQM (76 aa)). Residues 253–263 (AGYGQGPGGYG) are compositionally biased toward gly residues. Positions 254 to 304 (GYGQGPGGYGPQDSYGPQGGYQPDYGQPASSGGGGYGPQGDYGQQGYGPQG) are repeats, Gly/Tyr-rich. The segment covering 264–283 (PQDSYGPQGGYQPDYGQPAS) has biased composition (low complexity). Over residues 284–302 (SGGGGYGPQGDYGQQGYGP) the composition is skewed to gly residues.

It belongs to the synaptophysin/synaptobrevin family. In terms of assembly, homohexamer or homotetramer. Interacts with SRCIN1. Interacts with VAMP2; the interaction is inhibited by interaction of VAPM2 with SEPT8. Ubiquitinated; mediated by SIAH1 or SIAH2 and leading to its subsequent proteasomal degradation. In terms of processing, phosphorylated by SRC. As to expression, characteristic of a type of small (30-80 nm) neurosecretory vesicles, including presynaptic vesicles, but also vesicles of various neuroendocrine cells of both neuronal and epithelial phenotype.

The protein localises to the cytoplasmic vesicle. The protein resides in the secretory vesicle. It localises to the synaptic vesicle membrane. It is found in the synapse. Its subcellular location is the synaptosome. Functionally, possibly involved in structural functions as organizing other membrane components or in targeting the vesicles to the plasma membrane. Involved in the regulation of short-term and long-term synaptic plasticity. The protein is Synaptophysin (SYP) of Bos taurus (Bovine).